The sequence spans 365 residues: Coxsackievirus and adenovirus receptor homolog (365 aa).

Positions 1–19 (MALLLCFVLLCGVADFTSS) are cleaved as a signal peptide. 2 consecutive Ig-like C2-type domains span residues 20–136 (LSIT…FLLT) and 141–228 (PSGT…LRLD). The Extracellular portion of the chain corresponds to 20–238 (LSITTPEQRI…VVPPSNRAGT (219 aa)). Intrachain disulfides connect C41–C120, C146–C223, and C162–C212. An N-linked (GlcNAc...) asparagine glycan is attached at N106. A helical transmembrane segment spans residues 239-259 (IAGAVIGTLLALVLIGAILFC). Residues C259 and C260 are each lipidated (S-palmitoyl cysteine). Topologically, residues 260–365 (CHKKRREEKY…PAQSKDGSIV (106 aa)) are cytoplasmic. Residues 269–282 (YEKEVHHDIREDVP) are compositionally biased toward basic and acidic residues. The tract at residues 269–315 (YEKEVHHDIREDVPPPKSRTSTARSYIGSNHSSLGSMSPSNMEGYSK) is disordered. Residues 286–315 (SRTSTARSYIGSNHSSLGSMSPSNMEGYSK) show a composition bias toward polar residues. A phosphoserine mark is found at S297, S304, S306, S323, S332, and S363. The PDZ-binding motif lies at 360-365 (KDGSIV).

Monomer. May form homodimer. Interacts with LNX, MAGI1, DLG4, PRKCABP, TJP1 and CTNNB1. Interacts with MPDZ; recruits MPDZ to intercellular contact sites. Interacts with JAML (homodimeric form). Post-translationally, N-glycosylated. Palmitoylated on Cys-259 and/or Cys-260; required for proper localization to the plasma membrane. In terms of tissue distribution, expressed in heart, brain, spleen, lung, liver, muscle, kidney, testis, spleen and skeletal muscle.

The protein resides in the cell membrane. It is found in the basolateral cell membrane. Its subcellular location is the cell junction. The protein localises to the tight junction. It localises to the adherens junction. Component of the epithelial apical junction complex that may function as a homophilic cell adhesion molecule and is essential for tight junction integrity. Also involved in transepithelial migration of leukocytes through adhesive interactions with JAML a transmembrane protein of the plasma membrane of leukocytes. The interaction between both receptors also mediates the activation of gamma-delta T-cells, a subpopulation of T-cells residing in epithelia and involved in tissue homeostasis and repair. Upon epithelial CXADR-binding, JAML induces downstream cell signaling events in gamma-delta T-cells through PI3-kinase and MAP kinases. It results in proliferation and production of cytokines and growth factors by T-cells that in turn stimulate epithelial tissues repair. The chain is Coxsackievirus and adenovirus receptor homolog (Cxadr) from Rattus norvegicus (Rat).